The chain runs to 138 residues: Basic phospholipase A2 homolog acutohaemolysin (138 aa).

A signal peptide spans 1–16 (MRALWIVAVLLVGVEG). Intrachain disulfides connect C42–C131, C44–C60, C59–C111, C65–C138, C66–C104, C73–C97, and C91–C102. An important for membrane-damaging activities in eukaryotes and bacteria; heparin-binding region spans residues 121 to 133 (KSFRYHLKPSCKK).

As to quaternary structure, monomer. As to expression, expressed by the venom gland.

It localises to the secreted. Snake venom phospholipase A2 homolog that lacks enzymatic activity. Is myotoxic. Has a strong indirect hemolytic activity and anticoagulant activity. A model of myotoxic mechanism has been proposed: an apo Lys49-PLA2 is activated by the entrance of a hydrophobic molecule (e.g. fatty acid) at the hydrophobic channel of the protein leading to a reorientation of a monomer. This reorientation causes a transition between 'inactive' to 'active' states, causing alignment of C-terminal and membrane-docking sites (MDoS) side-by-side and putting the membrane-disruption sites (MDiS) in the same plane, exposed to solvent and in a symmetric position for both monomers. The MDoS region stabilizes the toxin on membrane by the interaction of charged residues with phospholipid head groups. Subsequently, the MDiS region destabilizes the membrane with penetration of hydrophobic residues. This insertion causes a disorganization of the membrane, allowing an uncontrolled influx of ions (i.e. calcium and sodium), and eventually triggering irreversible intracellular alterations and cell death. The polypeptide is Basic phospholipase A2 homolog acutohaemolysin (Deinagkistrodon acutus (Hundred-pace snake)).